Consider the following 307-residue polypeptide: Mitogen-activated protein kinase kinase 7 (307 aa).

A Protein kinase domain is found at 45-303 (VEKLHVLGRG…ASQLLGHPFL (259 aa)). ATP contacts are provided by residues 51–59 (LGRGSSGIV) and Lys74. Catalysis depends on Asp165, which acts as the Proton acceptor. A phosphoserine mark is found at Ser193 and Ser199. Thr203 is modified (phosphothreonine).

The protein belongs to the protein kinase superfamily. STE Ser/Thr protein kinase family. MAP kinase kinase subfamily. As to quaternary structure, interacts with MPK15. Phosphorylation at Ser-193 and Ser-199 by MAP kinase kinase kinases positively regulates kinase activity. As to expression, expressed in all tissues, with a relatively higher level in leaves and lower level in roots and flowers.

The enzyme catalyses L-seryl-[protein] + ATP = O-phospho-L-seryl-[protein] + ADP + H(+). It catalyses the reaction L-threonyl-[protein] + ATP = O-phospho-L-threonyl-[protein] + ADP + H(+). It carries out the reaction L-tyrosyl-[protein] + ATP = O-phospho-L-tyrosyl-[protein] + ADP + H(+). Functionally, may function as a negative regulator of polar auxin transport. Positively regulates plant basal and systemic acquired resistance (SAR). Activates MPK3 and MPK6 in vitro. The sequence is that of Mitogen-activated protein kinase kinase 7 (MKK7) from Arabidopsis thaliana (Mouse-ear cress).